Here is a 166-residue protein sequence, read N- to C-terminus: Cytochrome c-type biogenesis protein CcmE (166 aa).

Over 1 to 7 (MTRKQKR) the chain is Cytoplasmic. Residues 8-28 (LALIASGAVVVSLAVGLVMFA) traverse the membrane as a helical; Signal-anchor for type II membrane protein segment. At 29 to 166 (LRDNIVFFYS…QTAPQGAQAY (138 aa)) the chain is on the periplasmic side. H122 and Y126 together coordinate heme. A disordered region spans residues 139–166 (GVWQEEGKSEGKPSAIPAQTAPQGAQAY).

Belongs to the CcmE/CycJ family.

Its subcellular location is the cell inner membrane. Its function is as follows. Heme chaperone required for the biogenesis of c-type cytochromes. Transiently binds heme delivered by CcmC and transfers the heme to apo-cytochromes in a process facilitated by CcmF and CcmH. This is Cytochrome c-type biogenesis protein CcmE from Methylocella silvestris (strain DSM 15510 / CIP 108128 / LMG 27833 / NCIMB 13906 / BL2).